The following is a 361-amino-acid chain: [LysW]-lysine hydrolase (361 aa).

Position 67 (His67) interacts with Zn(2+). Asp69 is a catalytic residue. Asp91 serves as a coordination point for Zn(2+). The Proton acceptor role is filled by Glu124. The Zn(2+) site is built by Glu125, Glu148, and His326.

This sequence belongs to the peptidase M20A family. LysK subfamily. Requires Zn(2+) as cofactor. The cofactor is Co(2+).

Its subcellular location is the cytoplasm. It catalyses the reaction [amino-group carrier protein]-C-terminal-gamma-(L-lysyl)-L-glutamate + H2O = [amino-group carrier protein]-C-terminal-L-glutamate + L-lysine. It functions in the pathway amino-acid biosynthesis; L-lysine biosynthesis via AAA pathway; L-lysine from L-alpha-aminoadipate (Thermus route): step 5/5. Functionally, catalyzes the release of L-lysine from [LysW]-gamma-L-lysine. In Thermus thermophilus (strain ATCC 27634 / DSM 579 / HB8), this protein is [LysW]-lysine hydrolase.